Consider the following 56-residue polypeptide: Small ribosomal subunit protein uS14 (56 aa).

Residues Cys21, Cys24, Cys39, and Cys42 each contribute to the Zn(2+) site.

It belongs to the universal ribosomal protein uS14 family. Zn(2+) serves as cofactor.

This chain is Small ribosomal subunit protein uS14 (RPS29), found in Debaryomyces hansenii (strain ATCC 36239 / CBS 767 / BCRC 21394 / JCM 1990 / NBRC 0083 / IGC 2968) (Yeast).